A 419-amino-acid chain; its full sequence is MNLLEHMGKAAKQASWQLAMLSTAKKNQALAVIANLLESESQTILQANERDMAAARESGMSEALLDRLLLTPARLAAIANDVRQVCRLNDPVGRVIDGSLLDSGLKLERRRVPLGVIGVIYEARPNVTIDVASLCLKTGNAVILRGGKETHHTNQATVNVIQRALEQCGLPAAAVQAIESPDRQLVNELLRLDRYVDMLIPRGGASLHKLCREQSTIPVITGGIGVCHTFVDENADFEKALLVIENAKIQRPSACNSLETLLVHQAVAKTFLPLLSARMHAFGVTLHASPLAMPYLADGKAKVVAVEAADYDDEWLSLDLNVDIVTDIDAAIDHIREHGTSHSDAILTRSLSHAEYFVRAVDSSAVYVNASTRFTDGGQFGLGAEVAVSTQKLHARGPMGLDALTTYKWIGYGDDLVRS.

This sequence belongs to the gamma-glutamyl phosphate reductase family.

The protein localises to the cytoplasm. It carries out the reaction L-glutamate 5-semialdehyde + phosphate + NADP(+) = L-glutamyl 5-phosphate + NADPH + H(+). It functions in the pathway amino-acid biosynthesis; L-proline biosynthesis; L-glutamate 5-semialdehyde from L-glutamate: step 2/2. Functionally, catalyzes the NADPH-dependent reduction of L-glutamate 5-phosphate into L-glutamate 5-semialdehyde and phosphate. The product spontaneously undergoes cyclization to form 1-pyrroline-5-carboxylate. This Yersinia pseudotuberculosis serotype O:1b (strain IP 31758) protein is Gamma-glutamyl phosphate reductase.